We begin with the raw amino-acid sequence, 550 residues long: CTP synthase (550 aa).

Positions Met-1–Leu-265 are amidoligase domain. A CTP-binding site is contributed by Ser-13. Residue Ser-13 participates in UTP binding. Position 14–19 (Ser-14–Ile-19) interacts with ATP. Tyr-54 lines the L-glutamine pocket. Residue Asp-71 coordinates ATP. Mg(2+) contacts are provided by Asp-71 and Glu-139. CTP is bound by residues Asp-146 to Glu-148, Lys-186 to Gln-191, and Lys-222. Residues Lys-186–Gln-191 and Lys-222 contribute to the UTP site. Positions Thr-290–Arg-541 constitute a Glutamine amidotransferase type-1 domain. Gly-351 serves as a coordination point for L-glutamine. The active-site Nucleophile; for glutamine hydrolysis is the Cys-378. L-glutamine contacts are provided by residues Leu-379–Gln-382, Glu-402, and Arg-469. Active-site residues include His-514 and Glu-516.

It belongs to the CTP synthase family. As to quaternary structure, homotetramer.

The enzyme catalyses UTP + L-glutamine + ATP + H2O = CTP + L-glutamate + ADP + phosphate + 2 H(+). It carries out the reaction L-glutamine + H2O = L-glutamate + NH4(+). The catalysed reaction is UTP + NH4(+) + ATP = CTP + ADP + phosphate + 2 H(+). It participates in pyrimidine metabolism; CTP biosynthesis via de novo pathway; CTP from UDP: step 2/2. Allosterically activated by GTP, when glutamine is the substrate; GTP has no effect on the reaction when ammonia is the substrate. The allosteric effector GTP functions by stabilizing the protein conformation that binds the tetrahedral intermediate(s) formed during glutamine hydrolysis. Inhibited by the product CTP, via allosteric rather than competitive inhibition. Catalyzes the ATP-dependent amination of UTP to CTP with either L-glutamine or ammonia as the source of nitrogen. Regulates intracellular CTP levels through interactions with the four ribonucleotide triphosphates. In Nitrosococcus oceani (strain ATCC 19707 / BCRC 17464 / JCM 30415 / NCIMB 11848 / C-107), this protein is CTP synthase.